A 264-amino-acid polypeptide reads, in one-letter code: MKVYGLIGKPVSHSLSPVMHNALFRKYGIDAVYVTFEVEELGKAIDGVRALGISGLNVTMPYKEVVTKFLDELSEDAREINSVNTIINLEGSLIGYTTDGVGARKALERFTEIEGRNVLILGAGGAGKAIAYELSKIANIVVLNRTPSKAKSLEKFGVKGGSLDELPNYVGWADVLINATSVGMGTNESLVPRRLLRRELIVMDIVYKPLKTRLLRDAESVGCRVIDGLWMLIYQGAESFKLWTGIYPDVELMRRVSLERLGKG.

Shikimate-binding positions include 14–16 and threonine 59; that span reads SLS. The Proton acceptor role is filled by lysine 63. NADP(+) is bound at residue glutamate 75. Positions 84 and 99 each coordinate shikimate. NADP(+) contacts are provided by residues 122–126, 144–149, and isoleucine 205; these read GAGGA and NRTPSK. Shikimate is bound at residue tyrosine 207. Glycine 228 provides a ligand contact to NADP(+).

This sequence belongs to the shikimate dehydrogenase family. In terms of assembly, homodimer.

The catalysed reaction is shikimate + NADP(+) = 3-dehydroshikimate + NADPH + H(+). The protein operates within metabolic intermediate biosynthesis; chorismate biosynthesis; chorismate from D-erythrose 4-phosphate and phosphoenolpyruvate: step 4/7. In terms of biological role, involved in the biosynthesis of the chorismate, which leads to the biosynthesis of aromatic amino acids. Catalyzes the reversible NADPH linked reduction of 3-dehydroshikimate (DHSA) to yield shikimate (SA). The sequence is that of Shikimate dehydrogenase (NADP(+)) from Pyrococcus abyssi (strain GE5 / Orsay).